A 67-amino-acid polypeptide reads, in one-letter code: MPKLKTRKAAAKRFRPTGSGKKIIRRKAFKNHLLEHKSSEQKHRRLSNLALVHEADEKNVRLMLPYM.

It belongs to the bacterial ribosomal protein bL35 family.

This chain is Large ribosomal subunit protein bL35, found in Synechocystis sp. (strain ATCC 27184 / PCC 6803 / Kazusa).